The chain runs to 207 residues: Basic helix-loop-helix transcription factor scleraxis (207 aa).

2 disordered regions span residues 1–91 (MSFA…RDRT) and 151–183 (AFFH…QPKQ). Basic and acidic residues predominate over residues 73–91 (PGREPRQRHTANARERDRT). Positions 78 to 130 (RQRHTANARERDRTNSVNTAFTALRTLIPTEPADRKLSKIETLRLASSYISHL) constitute a bHLH domain. Residues 161 to 171 (PLPPPPPPPPL) show a composition bias toward pro residues.

Efficient DNA binding requires dimerization with another bHLH protein. Dimerizes and binds the E-box consensus sequence with E12. Expressed in mesenchymal precursors of cartilage and in connective tissue. Highly expressed in tendons in the limb, tongue and diaphragm and in cartilage of the bronchi.

The protein resides in the nucleus. Plays an early essential role in mesoderm formation, as well as a later role in formation of somite-derived chondrogenic lineages. The polypeptide is Basic helix-loop-helix transcription factor scleraxis (Scx) (Mus musculus (Mouse)).